Consider the following 317-residue polypeptide: AT-hook motif nuclear-localized protein 22 (317 aa).

Disordered regions lie at residues 22 to 41 (HHQF…HDID) and 48 to 106 (LKRD…KPPI). Residues 26–35 (QHQQQQQQQN) are compositionally biased toward low complexity. The segment covering 48 to 64 (LKRDRDADIDPNEHSSA) has biased composition (basic and acidic residues). A compositionally biased stretch (gly residues) spans 72–84 (GSGGESGGGGGGD). The segment at residues 89-101 (RRPRGRPAGSKNK) is a DNA-binding region (a.T hook). Residues 113–253 (ANALKSHVME…EDDQEEQTAG (141 aa)) enclose the PPC domain. The disordered stretch occupies residues 258 to 285 (NIDGNATMGGGTQTQTQTQQQQQQQLMQ). Residues 270–282 (QTQTQTQQQQQQQ) show a composition bias toward low complexity.

In terms of assembly, homodimer. Interacts with HDA1/HDA19, HDA6 and HDA9. Expressed at the hypocotyl-root transition zone and the root hair zone. Also detected in the inflorescence.

It is found in the nucleus. Its function is as follows. Transcription factor that specifically binds AT-rich DNA sequences related to the nuclear matrix attachment regions (MARs). Binds an AT-rich DNA sequences in the FLOWERING LOCUS T (FT) promoter. Acts redundantly with AHL18, AHL27 and AHL29 in the regulation of flowering and regulation of the hypocotyl elongation. Plays a role in both photo- and skotomorphogenesis. Acts as a chromatin remodeling factor that modifies the architecture of FLOWERING LOCUS T (FT) chromatin by modulating both H3 acetylation and methylation leading to the regulation of FT expression during flowering induction. This Arabidopsis thaliana (Mouse-ear cress) protein is AT-hook motif nuclear-localized protein 22.